We begin with the raw amino-acid sequence, 85 residues long: Protein C4 (85 aa).

Gly-2 carries N-myristoyl glycine; by host lipidation. Residues 42-65 (LNPAPTSSPTSTRTETQLNGGNSR) form a disordered region. Residues 44-57 (PAPTSSPTSTRTET) show a composition bias toward low complexity.

This sequence belongs to the geminiviridae protein AC4/C4 family. Interacts with Arabidopsis thaliana RCH2, ASK7/ASK-eta and ASK6/ASK-zeta. In terms of processing, phosphorylated by Arabidopsis thaliana ASK7/ASK-eta mainly on threonine and serine residues. In terms of tissue distribution, expressed in vascular tissues, and especially in phloem cells.

It localises to the host cell membrane. In terms of biological role, major determinant of pathogenesis that affects the hyperplastic response of the host to viral infection. Mediates the induction of cell division in permissive cells, mainly in phloem. May act as a suppressor of RNA-mediated gene silencing, also known as post-transcriptional gene silencing (PTGS), a mechanism of plant viral defense that limits the accumulation of viral RNAs. The sequence is that of Protein C4 from Beet curly top virus (strain California/Logan) (BCTV).